Here is a 367-residue protein sequence, read N- to C-terminus: 2,6-dihydropseudooxynicotine hydrolase (367 aa).

Active-site residues include E148, S217, D300, and H329.

This sequence belongs to the AB hydrolase superfamily. As to quaternary structure, homodimer.

The enzyme catalyses 2,6-dihydroxypseudooxynicotine + H2O = 2,6-dihydroxypyridine + 4-(methylamino)butanoate + H(+). It participates in alkaloid degradation; nicotine degradation; 2,6-dihydroxypyridine and 4-(methylamino)butanoate from 6-hydroxypseudooxynicotine: step 2/2. Its function is as follows. L-nicotine is used as a growth substrate. Plays a role in nicotine catabolism by cleaving a C-C bond in 2,6-dihydroxypseudooxynicotine. This chain is 2,6-dihydropseudooxynicotine hydrolase, found in Paenarthrobacter nicotinovorans (Arthrobacter nicotinovorans).